The primary structure comprises 384 residues: Early estrogen-induced gene 1 protein (384 aa).

Residues 2–145 (AFLMKKKKFK…ILKVTIGMFL (144 aa)) enclose the C2 NT-type domain. The required for interaction with TNFRSF11A/RANK stretch occupies residues 129–138 (NTRQDNSILK). Residues 173–315 (LTCKGGGTSS…RRKKDSVESH (143 aa)) form a disordered region. Positions 183–193 (GGSSTNSLTGS) are enriched in low complexity. Positions 227-254 (SRNSSYASQQSKISGYSTEHSRSSSLSD) are enriched in polar residues. 2 stretches are compositionally biased toward basic and acidic residues: residues 280-292 (GSER…EKPP) and 299-315 (HLSD…VESH).

It belongs to the EEIG family. Part of a complex composed of EEIG1, TNFRSF11A/RANK, PLCG2, GAB2, TEC and BTK; complex formation increases in the presence of TNFSF11/RANKL. Interacts with PRDM1/BLIMP1; following TNFSF11/RANKL stimulation in bone marrow-derived macrophages, the interaction promotes the binding of PRDM1/BLIMP1 to the gene promoter of IRF8.

The protein resides in the nucleus. It is found in the cytoplasm. The protein localises to the membrane raft. Functionally, key component of TNFSF11/RANKL- and TNF-induced osteoclastogenesis pathways, thereby mediates bone resorption in pathological bone loss conditions. Required for TNFSF11/RANKL-induced osteoclastogenesis via its interaction with TNFRSF11A/RANK, thereby facilitates the downsteam transcription of NFATC1 and activation of PLCG2. Facilitates recruitment of the transcriptional repressor PRDM1/BLIMP1 to the promoter of the anti-osteoclastogenesis gene IRF8, thereby resulting in transcription of osteoclast differentiation factors. May play a role in estrogen action. This chain is Early estrogen-induced gene 1 protein, found in Homo sapiens (Human).